A 103-amino-acid chain; its full sequence is U6 snRNA-associated Sm-like protein LSm7 (103 aa).

Residue Ala-2 is modified to N-acetylalanine. In terms of domain architecture, Sm spans Glu-10–Met-90.

This sequence belongs to the snRNP Sm proteins family. In terms of assembly, component of the precatalytic spliceosome (spliceosome B complex). Component of the U4/U6-U5 tri-snRNP complex, a building block of the precatalytic spliceosome (spliceosome B complex). The U4/U6-U5 tri-snRNP complex is composed of the U4, U6 and U5 snRNAs and at least PRPF3, PRPF4, PRPF6, PRPF8, PRPF31, SNRNP200, TXNL4A, SNRNP40, SNRPB, SNRPD1, SNRPD2, SNRPD3, SNRPE, SNRPF, SNRPG, DDX23, CD2BP2, PPIH, SNU13, EFTUD2, SART1 and USP39, plus LSM2, LSM3, LSM4, LSM5, LSM6, LSM7 and LSM8. LSM2, LSM3, LSM4, LSM5, LSM6, LSM7 and LSM8 form a heptameric, ring-shaped subcomplex (the LSM2-8 complex) that is part of the U4/U6-U5 tri-snRNP complex and the precatalytic spliceosome. Interacts with TACC1.

It is found in the nucleus. Plays a role in pre-mRNA splicing as component of the U4/U6-U5 tri-snRNP complex that is involved in spliceosome assembly, and as component of the precatalytic spliceosome (spliceosome B complex). The heptameric LSM2-8 complex binds specifically to the 3'-terminal U-tract of U6 snRNA. This chain is U6 snRNA-associated Sm-like protein LSm7 (LSM7), found in Homo sapiens (Human).